The following is a 75-amino-acid chain: Small ribosomal subunit protein bS18c (75 aa).

Belongs to the bacterial ribosomal protein bS18 family. As to quaternary structure, part of the 30S ribosomal subunit.

It localises to the plastid. The protein localises to the chloroplast. The sequence is that of Small ribosomal subunit protein bS18c from Psilotum nudum (Whisk fern).